The chain runs to 326 residues: Acetyl-coenzyme A carboxylase carboxyl transferase subunit beta (326 aa).

Residues 29-298 (LWIKCEACGT…TLISDESLET (270 aa)) enclose the CoA carboxyltransferase N-terminal domain. Positions 33, 36, 52, and 55 each coordinate Zn(2+). A C4-type zinc finger spans residues 33–55 (CEACGTLTYTKDLQANQMVCPEC). Positions 302–326 (CHLPFQAESHNLSTTDNKIQPTPQG) are disordered. A compositionally biased stretch (polar residues) spans 309–326 (ESHNLSTTDNKIQPTPQG).

The protein belongs to the AccD/PCCB family. Acetyl-CoA carboxylase is a heterohexamer composed of biotin carboxyl carrier protein (AccB), biotin carboxylase (AccC) and two subunits each of ACCase subunit alpha (AccA) and ACCase subunit beta (AccD). Zn(2+) serves as cofactor.

Its subcellular location is the cytoplasm. The enzyme catalyses N(6)-carboxybiotinyl-L-lysyl-[protein] + acetyl-CoA = N(6)-biotinyl-L-lysyl-[protein] + malonyl-CoA. It functions in the pathway lipid metabolism; malonyl-CoA biosynthesis; malonyl-CoA from acetyl-CoA: step 1/1. In terms of biological role, component of the acetyl coenzyme A carboxylase (ACC) complex. Biotin carboxylase (BC) catalyzes the carboxylation of biotin on its carrier protein (BCCP) and then the CO(2) group is transferred by the transcarboxylase to acetyl-CoA to form malonyl-CoA. The polypeptide is Acetyl-coenzyme A carboxylase carboxyl transferase subunit beta (Trichodesmium erythraeum (strain IMS101)).